We begin with the raw amino-acid sequence, 505 residues long: ATP synthase subunit alpha (505 aa).

Gly-169–Thr-176 serves as a coordination point for ATP.

This sequence belongs to the ATPase alpha/beta chains family. In terms of assembly, F-type ATPases have 2 components, CF(1) - the catalytic core - and CF(0) - the membrane proton channel. CF(1) has five subunits: alpha(3), beta(3), gamma(1), delta(1), epsilon(1). CF(0) has three main subunits: a(1), b(2) and c(9-12). The alpha and beta chains form an alternating ring which encloses part of the gamma chain. CF(1) is attached to CF(0) by a central stalk formed by the gamma and epsilon chains, while a peripheral stalk is formed by the delta and b chains.

It is found in the cell membrane. It catalyses the reaction ATP + H2O + 4 H(+)(in) = ADP + phosphate + 5 H(+)(out). Functionally, produces ATP from ADP in the presence of a proton gradient across the membrane. The alpha chain is a regulatory subunit. This chain is ATP synthase subunit alpha, found in Leuconostoc mesenteroides subsp. mesenteroides (strain ATCC 8293 / DSM 20343 / BCRC 11652 / CCM 1803 / JCM 6124 / NCDO 523 / NBRC 100496 / NCIMB 8023 / NCTC 12954 / NRRL B-1118 / 37Y).